The primary structure comprises 138 residues: Salivary protein 15 Iper-3 (138 aa).

Residues 1–21 (MESFVAMKVVCITVLFVIVAV) form the signal peptide. Asparagine 30, asparagine 42, asparagine 68, asparagine 107, and asparagine 127 each carry an N-linked (GlcNAc...) asparagine glycan. Residues 119 to 138 (GPNGQKCANKSQCVGHIPGC) form a CD4-binding region.

It belongs to the salp15 family. Interacts with host CD4. Interacts with host DC-SIGN (CD209). Interacts with Borrelia outer surface protein C (OspC). As to expression, expressed in salivary glands.

It localises to the secreted. Its function is as follows. Salivary tick protein that downregulates host immune system by binding to both dendritic cells, and CD4(+) T cells. Specifically binds to the CD4 coreceptor on T cells. This interaction prevents the activation of the Src kinase, Lck, and its downstream substrate Zap-70, and results in deficient activation of PLCgamma1, the repression of calcium fluxes triggered by T-cell antigen receptor (TCR) ligation, and a subsequent reduction in interleukin-2 production. This salivary protein also binds to DC-SIGN (CD209) on dendritic cells (DC) and activates the Raf-1 kinase/MEK signaling pathway that results in down-regulating expression of pro-inflammatory cytokines. Furthermore, it inhibits T cell proliferation induced by DCs. It also inhibits in vitro keratinocyte inflammation induced by Borrelia burgdorferi or by the major outer surface protein (OspC) of Borrelia. In addition, it downregulates chemokines and monocyte chemoattractant protein 1, as well as several antimicrobial peptides such as defensins, cathelicidin, psoriasin, and RNase 7. Apart from its immunomodulatory activities, it is also associated with protection of Borrelia spirochetes from antibody-mediated killing through its binding to OspC. In vivo, tests on different immune disease animal models show promising therapeutic results, e.g., in inhibiting HIV infection, experimental autoimmune encephalomyelitis, transplantation rejection, and asthma. This is Salivary protein 15 Iper-3 from Ixodes persulcatus (Taiga tick).